The primary structure comprises 431 residues: MKNYIEIVDVYARQILDSRCNPTVEVEVELEDGTVGVAAVPSGASTGAFEAVELRDGDKSKYLGKGVLKAVDNVNTIIADELVGMNVLDQVAIDKTMIELDGTDNKAKLGANAMLGVSLACAKAAANSLGMSLYQYIGGVNGKVLPVPMMNIINGGKHADNNVDLQEFMIMPAGAPSFSEALRMCSEVYHALKSTLKAQGYDTGVGDEGGFAPNLKSNEEAIVVIIEAIKKAGYTPGEDIFIALDPASSEIFEDGKYNLAGEGRVLTPEEMANYYVELAEKYPIISIEDGMAEEDWDGWKILTEKIGNKVQLVGDDLFVTNTERLSKGIKLGVANSILIKLNQIGTLTETLNAIEMAERAGYTAVVSHRSGETEDTTIADLVVAVNAGQIKTGAPARSERVAKYNQLLRIEEELNDMGEYRGLKAFYNINK.

Glutamine 166 is a binding site for (2R)-2-phosphoglycerate. Residue glutamate 208 is the Proton donor of the active site. Mg(2+) is bound by residues aspartate 245, glutamate 288, and aspartate 315. 4 residues coordinate (2R)-2-phosphoglycerate: lysine 340, arginine 369, serine 370, and lysine 391. The active-site Proton acceptor is lysine 340.

It belongs to the enolase family. Mg(2+) serves as cofactor.

The protein localises to the cytoplasm. It localises to the secreted. It is found in the cell surface. The catalysed reaction is (2R)-2-phosphoglycerate = phosphoenolpyruvate + H2O. The protein operates within carbohydrate degradation; glycolysis; pyruvate from D-glyceraldehyde 3-phosphate: step 4/5. Its function is as follows. Catalyzes the reversible conversion of 2-phosphoglycerate (2-PG) into phosphoenolpyruvate (PEP). It is essential for the degradation of carbohydrates via glycolysis. The polypeptide is Enolase (Clostridium botulinum (strain ATCC 19397 / Type A)).